The sequence spans 330 residues: ADP-L-glycero-D-manno-heptose-6-epimerase (330 aa).

Residues 11–12, 32–33, Gln-39, Gln-54, 75–79, and Asn-92 contribute to the NADP(+) site; these read FI, DD, and QGACA. The Proton acceptor role is filled by Tyr-139. An NADP(+)-binding site is contributed by Lys-143. Asn-168 contacts substrate. Residues Val-169 and Lys-177 each coordinate NADP(+). The Proton acceptor role is filled by Lys-177. Residues Arg-179, His-186, 200 to 203, Arg-213, and Tyr-292 each bind substrate; that span reads FGEH.

It belongs to the NAD(P)-dependent epimerase/dehydratase family. HldD subfamily. Homopentamer. Requires NADP(+) as cofactor.

It carries out the reaction ADP-D-glycero-beta-D-manno-heptose = ADP-L-glycero-beta-D-manno-heptose. It participates in nucleotide-sugar biosynthesis; ADP-L-glycero-beta-D-manno-heptose biosynthesis; ADP-L-glycero-beta-D-manno-heptose from D-glycero-beta-D-manno-heptose 7-phosphate: step 4/4. Its pathway is bacterial outer membrane biogenesis; LPS core biosynthesis. Catalyzes the interconversion between ADP-D-glycero-beta-D-manno-heptose and ADP-L-glycero-beta-D-manno-heptose via an epimerization at carbon 6 of the heptose. The chain is ADP-L-glycero-D-manno-heptose-6-epimerase from Pseudomonas aeruginosa (strain ATCC 15692 / DSM 22644 / CIP 104116 / JCM 14847 / LMG 12228 / 1C / PRS 101 / PAO1).